A 126-amino-acid chain; its full sequence is Heterotrimeric G protein gamma subunit GPG1 (126 aa).

G proteins are composed of 3 units, alpha, beta and gamma. GPG1 interacts with the beta subunits GBP1 and GPB2.

The protein resides in the cytoplasm. Functionally, gamma subunit of a guanine nucleotide-binding protein (G protein). G proteins are involved as modulators or transducers in various transmembrane signaling systems. The beta and gamma chains are required for the GTPase activity, for replacement of GDP by GTP, and for G protein-effector interaction. Involved in the determination of the cAMP level according to nutritional conditions, most probably as a regulator of cAMP phosphodiesterase. Required for the control of pseudohyphal and haploid invasive growth. The polypeptide is Heterotrimeric G protein gamma subunit GPG1 (GPG1) (Saccharomyces cerevisiae (strain ATCC 204508 / S288c) (Baker's yeast)).